The primary structure comprises 530 residues: Transcriptional regulator VasH (530 aa).

One can recognise a Sigma-54 factor interaction domain in the interval 193–422; it reads LIGESAAMQK…LKHLIEFGCA (230 aa). ATP is bound by residues 221 to 228 and 284 to 293; these read GETGTGKE and ANGGTLFLDE.

Transcriptional regulator of the type VI secretion system. In Vibrio cholerae serotype O1 (strain ATCC 39315 / El Tor Inaba N16961), this protein is Transcriptional regulator VasH.